We begin with the raw amino-acid sequence, 348 residues long: Hereditary hemochromatosis protein (348 aa).

Positions 1-22 (MGPRARPALLLLMLLQTAVLQG) are cleaved as a signal peptide. Positions 23 to 114 (RLLRSHSLHY…IMENHNHSKE (92 aa)) are alpha-1. At 23 to 306 (RLLRSHSLHY…WEPSPSGTLV (284 aa)) the chain is on the extracellular side. N110, N130, and N234 each carry an N-linked (GlcNAc...) asparagine glycan. The interval 115–205 (SHTLQVILGC…ELGRGVLDQQ (91 aa)) is alpha-2. Disulfide bonds link C124–C187 and C225–C282. The segment at 206 to 297 (VPPLVKVTHH…GLDQPLIVIW (92 aa)) is alpha-3. Positions 207–298 (PPLVKVTHHV…LDQPLIVIWE (92 aa)) constitute an Ig-like C1-type domain. The tract at residues 298-306 (EPSPSGTLV) is connecting peptide. The helical transmembrane segment at 307 to 330 (IGVISGIAVFVVILFIGILFIILR) threads the bilayer. The Cytoplasmic segment spans residues 331 to 348 (KRQGSRGAMGHYVLAERE).

This sequence belongs to the MHC class I family. As to quaternary structure, binds TFR through the extracellular domain in a pH-dependent manner. As to expression, expressed in all tissues tested except brain.

The protein resides in the cell membrane. In terms of biological role, binds to transferrin receptor (TFR) and reduces its affinity for iron-loaded transferrin. This Homo sapiens (Human) protein is Hereditary hemochromatosis protein (HFE).